The primary structure comprises 161 residues: Regulator of ribonuclease activity A (161 aa).

It belongs to the RraA family. As to quaternary structure, homotrimer. Binds to both RNA-binding sites in the C-terminal region of Rne and to RhlB.

Its subcellular location is the cytoplasm. Globally modulates RNA abundance by binding to RNase E (Rne) and regulating its endonucleolytic activity. Can modulate Rne action in a substrate-dependent manner by altering the composition of the degradosome. Modulates RNA-binding and helicase activities of the degradosome. This Salmonella choleraesuis (strain SC-B67) protein is Regulator of ribonuclease activity A.